A 216-amino-acid polypeptide reads, in one-letter code: Germin-like protein 1-1 (216 aa).

Residues 1 to 24 form the signal peptide; sequence MARVQLWVAAACAVVLALAAPSLA. Residues Cys-34 and Cys-49 are joined by a disulfide bond. Asn-52 and Asn-76 each carry an N-linked (GlcNAc...) asparagine glycan. Positions 61 to 209 constitute a Cupin type-1 domain; it reads AGLKNPGNTN…AFRVDVPQVD (149 aa). His-109, His-111, Glu-116, and His-155 together coordinate Mn(2+).

Belongs to the germin family. As to quaternary structure, oligomer (believed to be a pentamer but probably hexamer).

It localises to the secreted. It is found in the extracellular space. The protein localises to the apoplast. Functionally, may play a role in plant defense. Probably has no oxalate oxidase activity even if the active site is conserved. This Oryza sativa subsp. japonica (Rice) protein is Germin-like protein 1-1 (GER4).